Here is a 110-residue protein sequence, read N- to C-terminus: Large ribosomal subunit protein uL22 (110 aa).

The protein belongs to the universal ribosomal protein uL22 family. In terms of assembly, part of the 50S ribosomal subunit.

In terms of biological role, this protein binds specifically to 23S rRNA; its binding is stimulated by other ribosomal proteins, e.g. L4, L17, and L20. It is important during the early stages of 50S assembly. It makes multiple contacts with different domains of the 23S rRNA in the assembled 50S subunit and ribosome. Its function is as follows. The globular domain of the protein is located near the polypeptide exit tunnel on the outside of the subunit, while an extended beta-hairpin is found that lines the wall of the exit tunnel in the center of the 70S ribosome. The polypeptide is Large ribosomal subunit protein uL22 (Janthinobacterium sp. (strain Marseille) (Minibacterium massiliensis)).